Consider the following 643-residue polypeptide: Threonine--tRNA ligase (643 aa).

The TGS domain maps to 1–61 (MIKVSLKDGS…NEDVSLSICT (61 aa)). Residues 240–540 (DHNKLGRELK…LIEKYAGAFP (301 aa)) are catalytic. Residues Cys335, His386, and His517 each contribute to the Zn(2+) site.

It belongs to the class-II aminoacyl-tRNA synthetase family. As to quaternary structure, homodimer. The cofactor is Zn(2+).

It is found in the cytoplasm. The enzyme catalyses tRNA(Thr) + L-threonine + ATP = L-threonyl-tRNA(Thr) + AMP + diphosphate + H(+). Functionally, catalyzes the attachment of threonine to tRNA(Thr) in a two-step reaction: L-threonine is first activated by ATP to form Thr-AMP and then transferred to the acceptor end of tRNA(Thr). Also edits incorrectly charged L-seryl-tRNA(Thr). The sequence is that of Threonine--tRNA ligase from Clostridium botulinum (strain Alaska E43 / Type E3).